Consider the following 525-residue polypeptide: MTENIHKHRILILDFGSQYTQLVARRVRELGVYCELWAWDVTEAQIRDFNPSGIILSGGPESTTEENSPRAPQYVFEAGVPVFGVCYGMQTMAMQLGGHVEGSNEREFGYAQVEVLTDSALVRGIEDSLTADGKPLLDVWMSHGDKVTAIPSDFVAVASTESCPFAIMANEEKRFYGVQFHPEVTHTRQGMRMLERFVRDICQCEALWTPAKIIDDAVARIREQVGDDKVILGLSGGVDSSVTAMLLHRAIGKNLTCVFVDNGLLRLNEAEQVMDMFGDHFGLNIVHVPAEERFLSALAGENDPEAKRKIIGRVFVEVFDEEALKLEDVKWLAQGTIYPDVIESAASATGKAHVIKSHHNVGGLPKEMKMGLVEPLKELFKDEVRKIGLELGLPYDMLYRHPFPGPGLGVRVLGEVKKEYCDLLRRADAIFIEELRKADLYDKVSQAFTVFLPVRSVGVMGDGRKYDWVVSLRAVETIDFMTAHWAHLPYDFLGRVSNRIINEVNGISRVVYDISGKPPATIEWE.

The Glutamine amidotransferase type-1 domain maps to 9 to 207; the sequence is RILILDFGSQ…VRDICQCEAL (199 aa). Cys86 functions as the Nucleophile in the catalytic mechanism. Active-site residues include His181 and Glu183. The GMPS ATP-PPase domain maps to 208 to 400; it reads WTPAKIIDDA…LGLPYDMLYR (193 aa). Residue 235–241 coordinates ATP; the sequence is SGGVDSS.

Homodimer.

It carries out the reaction XMP + L-glutamine + ATP + H2O = GMP + L-glutamate + AMP + diphosphate + 2 H(+). Its pathway is purine metabolism; GMP biosynthesis; GMP from XMP (L-Gln route): step 1/1. Functionally, catalyzes the synthesis of GMP from XMP. This chain is GMP synthase [glutamine-hydrolyzing], found in Salmonella newport (strain SL254).